The sequence spans 917 residues: Hexokinase HKDC1 (917 aa).

The segment at 1-20 is mitochondrial-binding peptide (MBP); that stretch reads MFAVHLMAFYFSKLKEDQIK. Hexokinase domains follow at residues 16 to 458 and 464 to 905; these read EDQI…MVTA and QAQR…LITA. ATP contacts are provided by residues Arg30 and 84–89; that span reads DLGGSK. Positions 73 to 207 are hexokinase small subdomain 1; it reads DGSENGEFLS…DMDVDILALV (135 aa). 84-91 is a D-glucose 6-phosphate binding site; the sequence is DLGGSKFR. D-glucose is bound by residues Ser155, 172–173, and 208–209; these read TK and ND. The hexokinase large subdomain 1 stretch occupies residues 208 to 447; it reads NDTVGTMMTC…CDVRFLLSES (240 aa). Residues Asp209 and Thr232 each coordinate D-glucose 6-phosphate. Residues Asn235, Glu260, and 291-294 each bind D-glucose; that span reads QLFE. 413-415 lines the D-glucose 6-phosphate pocket; that stretch reads DGT. 425 to 426 is an ATP binding site; that stretch reads KR. D-glucose 6-phosphate is bound by residues Ser449 and 532 to 536; that span reads DLGGT. A hexokinase small subdomain 2 region spans residues 521–654; it reads DGTEKGKFLA…EFDLDIVAVV (134 aa). 532–537 is an ATP binding site; it reads DLGGTN. D-glucose contacts are provided by residues 602–603, 619–620, and 655–656; these read SF, TK, and ND. The hexokinase large subdomain 2 stretch occupies residues 655–894; it reads NDTVGTMMTC…CDVTFMLSED (240 aa). The D-glucose 6-phosphate site is built by Asp656 and Thr679. Thr679 lines the ATP pocket. Residues 681-682, Glu707, and Glu741 contribute to the D-glucose site; that span reads SN. ATP-binding positions include 746-747, 783-787, and 862-866; these read GM, TKFLS, and TLYKL. D-glucose 6-phosphate is bound by residues 860-862 and Ser896; that span reads DGT.

This sequence belongs to the hexokinase family. Widely expressed. Highly expressed in the brush border, surface epithelium and the myenteric plexus of the small and large intestines; the acinar centrocytes and interlobular ducts of the pancreas; and the alveolar macrophages in the lungs (at protein level). Present at moderate level in the thyroid follicular epithelium (at protein level).

It localises to the cytoplasm. The protein localises to the mitochondrion membrane. It is found in the photoreceptor inner segment. It carries out the reaction a D-hexose + ATP = a D-hexose 6-phosphate + ADP + H(+). It catalyses the reaction D-glucose + ATP = D-glucose 6-phosphate + ADP + H(+). The protein operates within carbohydrate metabolism; hexose metabolism. Its pathway is carbohydrate degradation; glycolysis; D-glyceraldehyde 3-phosphate and glycerone phosphate from D-glucose: step 1/4. Catalyzes the phosphorylation of hexose to hexose 6-phosphate, although at very low level compared to other hexokinases. Has low glucose phosphorylating activity compared to other hexokinases. Involved in glucose homeostasis and hepatic lipid accumulation. Required to maintain whole-body glucose homeostasis during pregnancy; however additional evidences are required to confirm this role. This chain is Hexokinase HKDC1, found in Homo sapiens (Human).